The chain runs to 59 residues: Small ribosomal subunit protein bS21 (59 aa).

Residues 40-59 (KPSVKRKKKSEAARKRKSFR) form a disordered region. A compositionally biased stretch (basic residues) spans 43 to 59 (VKRKKKSEAARKRKSFR).

Belongs to the bacterial ribosomal protein bS21 family.

The chain is Small ribosomal subunit protein bS21 from Desulforamulus reducens (strain ATCC BAA-1160 / DSM 100696 / MI-1) (Desulfotomaculum reducens).